The following is a 295-amino-acid chain: Bifunctional protein FolD (295 aa).

NADP(+)-binding positions include 166–168, S191, and I232; that span reads GRS.

Belongs to the tetrahydrofolate dehydrogenase/cyclohydrolase family. As to quaternary structure, homodimer.

The enzyme catalyses (6R)-5,10-methylene-5,6,7,8-tetrahydrofolate + NADP(+) = (6R)-5,10-methenyltetrahydrofolate + NADPH. It carries out the reaction (6R)-5,10-methenyltetrahydrofolate + H2O = (6R)-10-formyltetrahydrofolate + H(+). It functions in the pathway one-carbon metabolism; tetrahydrofolate interconversion. Catalyzes the oxidation of 5,10-methylenetetrahydrofolate to 5,10-methenyltetrahydrofolate and then the hydrolysis of 5,10-methenyltetrahydrofolate to 10-formyltetrahydrofolate. The sequence is that of Bifunctional protein FolD from Rhodopseudomonas palustris (strain BisB18).